The sequence spans 356 residues: UDP-3-O-acylglucosamine N-acyltransferase (356 aa).

Residue H242 is the Proton acceptor of the active site.

Belongs to the transferase hexapeptide repeat family. LpxD subfamily. In terms of assembly, homotrimer.

It carries out the reaction a UDP-3-O-[(3R)-3-hydroxyacyl]-alpha-D-glucosamine + a (3R)-hydroxyacyl-[ACP] = a UDP-2-N,3-O-bis[(3R)-3-hydroxyacyl]-alpha-D-glucosamine + holo-[ACP] + H(+). It functions in the pathway bacterial outer membrane biogenesis; LPS lipid A biosynthesis. Its function is as follows. Catalyzes the N-acylation of UDP-3-O-acylglucosamine using 3-hydroxyacyl-ACP as the acyl donor. Is involved in the biosynthesis of lipid A, a phosphorylated glycolipid that anchors the lipopolysaccharide to the outer membrane of the cell. The sequence is that of UDP-3-O-acylglucosamine N-acyltransferase from Acinetobacter baumannii (strain AB0057).